Consider the following 225-residue polypeptide: Transmembrane protein C16orf54 homolog (225 aa).

The helical transmembrane segment at 34–54 (IPIMLGLASLTAFFIITTAVL) threads the bilayer. The segment at 107–149 (RAPDPPTPGGTLEGRATAPPAIPTPHPSPSSLVPQTPPEVPAQ) is disordered. 2 positions are modified to phosphothreonine: T113 and T117. S195 is subject to Phosphoserine.

The protein resides in the membrane. The polypeptide is Transmembrane protein C16orf54 homolog (Rattus norvegicus (Rat)).